The sequence spans 37 residues: Large ribosomal subunit protein bL36 (37 aa).

The protein belongs to the bacterial ribosomal protein bL36 family.

The protein is Large ribosomal subunit protein bL36 of Leptothrix cholodnii (strain ATCC 51168 / LMG 8142 / SP-6) (Leptothrix discophora (strain SP-6)).